Reading from the N-terminus, the 468-residue chain is Glutamate--tRNA ligase (468 aa).

A 'HIGH' region motif is present at residues P10–G20. The short motif at K252–R256 is the 'KMSKS' region element. K255 is a binding site for ATP.

Belongs to the class-I aminoacyl-tRNA synthetase family. Glutamate--tRNA ligase type 1 subfamily. As to quaternary structure, monomer.

It localises to the cytoplasm. It catalyses the reaction tRNA(Glu) + L-glutamate + ATP = L-glutamyl-tRNA(Glu) + AMP + diphosphate. Catalyzes the attachment of glutamate to tRNA(Glu) in a two-step reaction: glutamate is first activated by ATP to form Glu-AMP and then transferred to the acceptor end of tRNA(Glu). The polypeptide is Glutamate--tRNA ligase (Mycoplasmopsis pulmonis (strain UAB CTIP) (Mycoplasma pulmonis)).